The sequence spans 276 residues: Undecaprenyl-diphosphatase (276 aa).

A run of 8 helical transmembrane segments spans residues 1–21 (MHWLEVVLLGVIQGLTEFLPV), 41–61 (LLLDICLHVGTLAAVLWVFFA), 97–117 (ALLIIIGTIPTGFIGMGFHKI), 121–141 (LFASPVLAGAMLLITGALLWA), 155–175 (VTWGNALTVGTIQGLAILPGI), 200–220 (FLLSIPAIVAALILEVADASA), 231–251 (LGGIVSAFTGLAALKWLLAIV), and 256–276 (LWWFAPYCWLVGATVLVANFV).

Belongs to the UppP family.

The protein localises to the cell inner membrane. It carries out the reaction di-trans,octa-cis-undecaprenyl diphosphate + H2O = di-trans,octa-cis-undecaprenyl phosphate + phosphate + H(+). In terms of biological role, catalyzes the dephosphorylation of undecaprenyl diphosphate (UPP). Confers resistance to bacitracin. The protein is Undecaprenyl-diphosphatase of Desulfatibacillum aliphaticivorans.